The primary structure comprises 181 residues: uncharacterized protein (181 aa).

In terms of domain architecture, Nudix hydrolase spans 35–175; sequence LRHRCVFVWA…ARLRAWRGAS (141 aa). Positions 72 to 94 match the Nudix box motif; the sequence is GGVVGAGESYDDAALREAEEELG. Glu-88 and Glu-92 together coordinate Mg(2+).

The protein belongs to the Nudix hydrolase family. It depends on Mg(2+) as a cofactor.

This is an uncharacterized protein from Streptomyces coelicolor (strain ATCC BAA-471 / A3(2) / M145).